Here is a 370-residue protein sequence, read N- to C-terminus: Pantothenate kinase 3 (370 aa).

Glu-138 (proton acceptor) is an active-site residue. 3 residues coordinate acetyl-CoA: Ser-192, Ser-195, and Arg-207.

The protein belongs to the type II pantothenate kinase family. In terms of assembly, homodimer. In terms of tissue distribution, highly expressed in the liver.

The protein resides in the cytoplasm. It carries out the reaction (R)-pantothenate + ATP = (R)-4'-phosphopantothenate + ADP + H(+). Its pathway is cofactor biosynthesis; coenzyme A biosynthesis; CoA from (R)-pantothenate: step 1/5. Its activity is regulated as follows. Subject to allosteric regulation, exists in two distinct conformational states, a catalytically incompetent (or open) conformation stabilized by the binding of acetyl(acyl)-CoA, and a catalytically competent (or closed) conformation stabilized by ATP-binding. Inhibited by acetyl-CoA and its thioesters which act as allosteric inhibitors and compete with the ATP-binding site. Inhibited by sulfonylureas and thiazolidinediones. Activated by oleoylethanolamide, palmitoyl-carnitine and oleoyl-carnitine. Functionally, catalyzes the phosphorylation of pantothenate to generate 4'-phosphopantothenate in the first and rate-determining step of coenzyme A (CoA) synthesis. In Homo sapiens (Human), this protein is Pantothenate kinase 3 (PANK3).